A 263-amino-acid polypeptide reads, in one-letter code: Fructose-bisphosphate aldolase class 1 (263 aa).

Substrate is bound by residues 24 to 25, H29, D33, and W144; that span reads DH. The Proton donor role is filled by Y146. Residues R148, 177 to 179, 202 to 204, and 231 to 232 contribute to the substrate site; these read KIK, SGG, and GR. Catalysis depends on K177, which acts as the Schiff-base intermediate with dihydroxyacetone-P.

The protein belongs to the DeoC/FbaB aldolase family. As to quaternary structure, homodecamer (dimer of pentamers).

The protein resides in the cytoplasm. The enzyme catalyses beta-D-fructose 1,6-bisphosphate = D-glyceraldehyde 3-phosphate + dihydroxyacetone phosphate. Its activity is regulated as follows. Activated by citrate. In terms of biological role, catalyzes the reversible cleavage of fructose 1,6-bisphosphate (FBP) to glyceraldehyde 3-phosphate (GAP) and dihydroxyacetone phosphate (DHAP). The polypeptide is Fructose-bisphosphate aldolase class 1 (fba) (Thermoproteus tenax (strain ATCC 35583 / DSM 2078 / JCM 9277 / NBRC 100435 / Kra 1)).